Reading from the N-terminus, the 199-residue chain is Recombination protein RecR (199 aa).

A C4-type zinc finger spans residues 57 to 72 (CSICGNITESDPCMIC). A Toprim domain is found at 80–176 (SKVVVVEQPK…KVTRLAHGLA (97 aa)).

The protein belongs to the RecR family.

In terms of biological role, may play a role in DNA repair. It seems to be involved in an RecBC-independent recombinational process of DNA repair. It may act with RecF and RecO. The chain is Recombination protein RecR from Ligilactobacillus salivarius (strain UCC118) (Lactobacillus salivarius).